Reading from the N-terminus, the 78-residue chain is Large ribosomal subunit protein bL28 (78 aa).

Residues 1–30 (MAAHCQVTGAQPGFGHSISHSHRRTKRRWN) form a disordered region. The span at 19 to 30 (SHSHRRTKRRWN) shows a compositional bias: basic residues.

This sequence belongs to the bacterial ribosomal protein bL28 family.

In Kocuria rhizophila (strain ATCC 9341 / DSM 348 / NBRC 103217 / DC2201), this protein is Large ribosomal subunit protein bL28.